The primary structure comprises 282 residues: Formamidopyrimidine-DNA glycosylase (282 aa).

The active-site Schiff-base intermediate with DNA is Pro2. The Proton donor role is filled by Glu3. Catalysis depends on Lys60, which acts as the Proton donor; for beta-elimination activity. DNA is bound by residues His99, Arg118, and Lys163. The FPG-type zinc finger occupies 248-282 (WVYRRSGKNCKKCGEKILREKICGRSTHWCPNCQK). The active-site Proton donor; for delta-elimination activity is the Arg272.

Belongs to the FPG family. Monomer. The cofactor is Zn(2+).

The catalysed reaction is Hydrolysis of DNA containing ring-opened 7-methylguanine residues, releasing 2,6-diamino-4-hydroxy-5-(N-methyl)formamidopyrimidine.. It catalyses the reaction 2'-deoxyribonucleotide-(2'-deoxyribose 5'-phosphate)-2'-deoxyribonucleotide-DNA = a 3'-end 2'-deoxyribonucleotide-(2,3-dehydro-2,3-deoxyribose 5'-phosphate)-DNA + a 5'-end 5'-phospho-2'-deoxyribonucleoside-DNA + H(+). In terms of biological role, involved in base excision repair of DNA damaged by oxidation or by mutagenic agents. Acts as a DNA glycosylase that recognizes and removes damaged bases. Has a preference for oxidized purines, such as 7,8-dihydro-8-oxoguanine (8-oxoG). Has AP (apurinic/apyrimidinic) lyase activity and introduces nicks in the DNA strand. Cleaves the DNA backbone by beta-delta elimination to generate a single-strand break at the site of the removed base with both 3'- and 5'-phosphates. The sequence is that of Formamidopyrimidine-DNA glycosylase from Prochlorococcus marinus (strain NATL2A).